Here is a 261-residue protein sequence, read N- to C-terminus: Small ribosomal subunit protein mS23 (261 aa).

The tract at residues 233–261 (RASSPSASWTNETEEEQKPIDQDVEEIQL) is disordered.

Belongs to the mitochondrion-specific ribosomal protein mS23 family. As to quaternary structure, component of the mitochondrial small ribosomal subunit.

It is found in the mitochondrion. This is Small ribosomal subunit protein mS23 (RSM25) from Kluyveromyces lactis (strain ATCC 8585 / CBS 2359 / DSM 70799 / NBRC 1267 / NRRL Y-1140 / WM37) (Yeast).